Reading from the N-terminus, the 466-residue chain is Ribulose bisphosphate carboxylase large chain (466 aa).

At lysine 5 the chain carries N6,N6,N6-trimethyllysine. The substrate site is built by asparagine 114 and threonine 164. The Proton acceptor role is filled by lysine 166. Lysine 168 provides a ligand contact to substrate. The Mg(2+) site is built by lysine 192, aspartate 194, and glutamate 195. Lysine 192 bears the N6-carboxylysine mark. Histidine 285 (proton acceptor) is an active-site residue. Substrate is bound by residues arginine 286, histidine 318, and serine 370.

This sequence belongs to the RuBisCO large chain family. Type I subfamily. Heterohexadecamer of 8 large chains and 8 small chains. Mg(2+) is required as a cofactor.

The protein resides in the plastid. The protein localises to the chloroplast. The enzyme catalyses 2 (2R)-3-phosphoglycerate + 2 H(+) = D-ribulose 1,5-bisphosphate + CO2 + H2O. It catalyses the reaction D-ribulose 1,5-bisphosphate + O2 = 2-phosphoglycolate + (2R)-3-phosphoglycerate + 2 H(+). Its function is as follows. RuBisCO catalyzes two reactions: the carboxylation of D-ribulose 1,5-bisphosphate, the primary event in carbon dioxide fixation, as well as the oxidative fragmentation of the pentose substrate in the photorespiration process. Both reactions occur simultaneously and in competition at the same active site. This chain is Ribulose bisphosphate carboxylase large chain, found in Drosera regia (King sundew).